The primary structure comprises 2511 residues: Fatty acid synthase (2511 aa).

The residue at position 1 (M1) is an N-acetylmethionine. Residues 1–406 (MEEVVIAGMS…GSNVHIILRP (406 aa)) form the Ketosynthase family 3 (KS3) domain. Position 63 is a phosphoserine (S63). An N6-acetyllysine modification is found at K70. The For beta-ketoacyl synthase activity role is filled by C161. Phosphoserine is present on S207. Catalysis depends on H293, which acts as the For beta-ketoacyl synthase activity. K298 carries the N6-acetyllysine modification. H331 functions as the For beta-ketoacyl synthase activity in the catalytic mechanism. The interval 429-817 (RTPEAVQKLL…IDANPNALFP (389 aa)) is acyl and malonyl transferases. K436 and K528 each carry N6-acetyllysine. The active-site For malonyltransferase activity is S581. An acyl-CoA-binding positions include 647-648 (DT) and F671. K673 is modified (N6-acetyllysine). S725 carries the phosphoserine modification. R773 serves as a coordination point for an acyl-CoA. The interval 838 to 966 (HSLAWDVPAA…KVYQWDDPDP (129 aa)) is N-terminal hotdog fold. The region spanning 838–1108 (HSLAWDVPAA…TESAPRRQQE (271 aa)) is the PKS/mFAS DH domain. H878 serves as the catalytic Proton acceptor; for dehydratase activity. The tract at residues 981–1108 (EPLFLAQAEV…TESAPRRQQE (128 aa)) is C-terminal hotdog fold. N6-acetyllysine is present on K992. D1031 functions as the Proton donor; for dehydratase activity in the catalytic mechanism. Residues S1174 and S1411 each carry the phosphoserine modification. C1471 carries the S-nitrosocysteine modification. Phosphoserine occurs at positions 1584 and 1594. Residues 1635–1863 (DVPSNWTLEE…VQVLAEEPEA (229 aa)) are enoyl reductase. Residue 1671-1688 (LLIHSGSGGVGQAAIAIA) participates in NADP(+) binding. K1704 carries the post-translational modification N6-(pyridoxal phosphate)lysine; alternate. At K1704 the chain carries N6-acetyllysine; alternate. N6-acetyllysine is present on residues K1771 and K1847. The tract at residues 1864–2118 (VLKGAKPKLM…FVLAEKAAAY (255 aa)) is beta-ketoacyl reductase. 1886-1901 (SYIIAGGLGGFGLELA) lines the NADP(+) pocket. K1995 is modified (N6-acetyllysine). C2091 bears the S-nitrosocysteine mark. The 78-residue stretch at 2121–2198 (RDSQRDLVEA…ELSSKADEAS (78 aa)) folds into the Carrier domain. O-(pantetheine 4'-phosphoryl)serine; alternate is present on S2156. Phosphoserine; alternate is present on S2156. S2198 is modified (phosphoserine). Phosphothreonine occurs at positions 2204 and 2215. The thioesterase stretch occupies residues 2207–2511 (EDGLAQQQTQ…AEPRVSVREG (305 aa)). S2236 carries the post-translational modification Phosphoserine. The active-site For thioesterase activity is S2308. The residue at position 2391 (K2391) is an N6-acetyllysine. K2449 participates in a covalent cross-link: Glycyl lysine isopeptide (Lys-Gly) (interchain with G-Cter in SUMO2). The For thioesterase activity role is filled by H2481.

In terms of assembly, homodimer which is arranged in a head to tail fashion. Interacts with CEACAM1; this interaction is insulin and phosphorylation-dependent; reduces fatty-acid synthase activity. Post-translationally, S-nitrosylation of Fatty acid synthase at cysteine residues Cys-1471 or Cys-2091 is important for the enzyme dimerization. In adipocytes, S-nitrosylation of Fatty acid synthase occurs under physiological conditions and gradually increases during adipogenesis. As to expression, ubiquitous. Prominent expression in brain, lung, liver and mammary gland.

It localises to the cytoplasm. It is found in the melanosome. It catalyses the reaction acetyl-CoA + n malonyl-CoA + 2n NADPH + 2n H(+) = a long-chain fatty acid + (n+1) CoA + n CO2 + 2n NADP(+).. It carries out the reaction holo-[ACP] + acetyl-CoA = acetyl-[ACP] + CoA. The catalysed reaction is holo-[ACP] + malonyl-CoA = malonyl-[ACP] + CoA. The enzyme catalyses a fatty acyl-[ACP] + malonyl-[ACP] + H(+) = a 3-oxoacyl-[ACP] + holo-[ACP] + CO2. It catalyses the reaction a (3R)-hydroxyacyl-[ACP] + NADP(+) = a 3-oxoacyl-[ACP] + NADPH + H(+). It carries out the reaction a (3R)-hydroxyacyl-[ACP] = a (2E)-enoyl-[ACP] + H2O. The catalysed reaction is a 2,3-saturated acyl-[ACP] + NADP(+) = a (2E)-enoyl-[ACP] + NADPH + H(+). The enzyme catalyses hexadecanoyl-[ACP] + H2O = hexadecanoate + holo-[ACP] + H(+). It catalyses the reaction acetyl-[ACP] + malonyl-[ACP] + H(+) = 3-oxobutanoyl-[ACP] + holo-[ACP] + CO2. It carries out the reaction 3-oxobutanoyl-[ACP] + NADPH + H(+) = (3R)-hydroxybutanoyl-[ACP] + NADP(+). The catalysed reaction is (3R)-hydroxybutanoyl-[ACP] = (2E)-butenoyl-[ACP] + H2O. The enzyme catalyses (2E)-butenoyl-[ACP] + NADPH + H(+) = butanoyl-[ACP] + NADP(+). It catalyses the reaction butanoyl-[ACP] + malonyl-[ACP] + H(+) = 3-oxohexanoyl-[ACP] + holo-[ACP] + CO2. It carries out the reaction 3-oxohexanoyl-[ACP] + NADPH + H(+) = (3R)-hydroxyhexanoyl-[ACP] + NADP(+). The catalysed reaction is (3R)-hydroxyhexanoyl-[ACP] = (2E)-hexenoyl-[ACP] + H2O. The enzyme catalyses (2E)-hexenoyl-[ACP] + NADPH + H(+) = hexanoyl-[ACP] + NADP(+). It catalyses the reaction hexanoyl-[ACP] + malonyl-[ACP] + H(+) = 3-oxooctanoyl-[ACP] + holo-[ACP] + CO2. It carries out the reaction 3-oxooctanoyl-[ACP] + NADPH + H(+) = (3R)-hydroxyoctanoyl-[ACP] + NADP(+). The catalysed reaction is (3R)-hydroxyoctanoyl-[ACP] = (2E)-octenoyl-[ACP] + H2O. The enzyme catalyses (2E)-octenoyl-[ACP] + NADPH + H(+) = octanoyl-[ACP] + NADP(+). It catalyses the reaction octanoyl-[ACP] + malonyl-[ACP] + H(+) = 3-oxodecanoyl-[ACP] + holo-[ACP] + CO2. It carries out the reaction 3-oxodecanoyl-[ACP] + NADPH + H(+) = (3R)-hydroxydecanoyl-[ACP] + NADP(+). The catalysed reaction is (3R)-hydroxydecanoyl-[ACP] = (2E)-decenoyl-[ACP] + H2O. The enzyme catalyses (2E)-decenoyl-[ACP] + NADPH + H(+) = decanoyl-[ACP] + NADP(+). It catalyses the reaction decanoyl-[ACP] + malonyl-[ACP] + H(+) = 3-oxododecanoyl-[ACP] + holo-[ACP] + CO2. It carries out the reaction 3-oxododecanoyl-[ACP] + NADPH + H(+) = (3R)-hydroxydodecanoyl-[ACP] + NADP(+). The catalysed reaction is (3R)-hydroxydodecanoyl-[ACP] = (2E)-dodecenoyl-[ACP] + H2O. The enzyme catalyses (2E)-dodecenoyl-[ACP] + NADPH + H(+) = dodecanoyl-[ACP] + NADP(+). It catalyses the reaction dodecanoyl-[ACP] + malonyl-[ACP] + H(+) = 3-oxotetradecanoyl-[ACP] + holo-[ACP] + CO2. It carries out the reaction 3-oxotetradecanoyl-[ACP] + NADPH + H(+) = (3R)-hydroxytetradecanoyl-[ACP] + NADP(+). The catalysed reaction is (3R)-hydroxytetradecanoyl-[ACP] = (2E)-tetradecenoyl-[ACP] + H2O. The enzyme catalyses (2E)-tetradecenoyl-[ACP] + NADPH + H(+) = tetradecanoyl-[ACP] + NADP(+). It catalyses the reaction tetradecanoyl-[ACP] + malonyl-[ACP] + H(+) = 3-oxohexadecanoyl-[ACP] + holo-[ACP] + CO2. It carries out the reaction 3-oxohexadecanoyl-[ACP] + NADPH + H(+) = (3R)-hydroxyhexadecanoyl-[ACP] + NADP(+). The catalysed reaction is (3R)-hydroxyhexadecanoyl-[ACP] = (2E)-hexadecenoyl-[ACP] + H2O. The enzyme catalyses (2E)-hexadecenoyl-[ACP] + NADPH + H(+) = hexadecanoyl-[ACP] + NADP(+). It catalyses the reaction hexadecanoyl-[ACP] + malonyl-[ACP] + H(+) = 3-oxooctadecanoyl-[ACP] + holo-[ACP] + CO2. It carries out the reaction 3-oxooctadecanoyl-[ACP] + NADPH + H(+) = (3R)-hydroxyoctadecanoyl-[ACP] + NADP(+). The catalysed reaction is (3R)-hydroxyoctadecanoyl-[ACP] = (2E)-octadecenoyl-[ACP] + H2O. The enzyme catalyses (2E)-octadecenoyl-[ACP] + NADPH + H(+) = octadecanoyl-[ACP] + NADP(+). It catalyses the reaction tetradecanoyl-[ACP] + H2O = tetradecanoate + holo-[ACP] + H(+). It carries out the reaction octadecanoyl-[ACP] + H2O = octadecanoate + holo-[ACP] + H(+). It participates in lipid metabolism; fatty acid biosynthesis. Its activity is regulated as follows. Activated by S-nitrosylation which promotes enzyme dimerization. Cerulenin, a potent non-competitive pharmacological inhibitor of FAS, binds covalently to the active site of the condensing enzyme region, inactivating a key enzyme step in fatty acid synthesis. Functionally, fatty acid synthetase is a multifunctional enzyme that catalyzes the de novo biosynthesis of long-chain saturated fatty acids starting from acetyl-CoA and malonyl-CoA in the presence of NADPH. This multifunctional protein contains 7 catalytic activities and a site for the binding of the prosthetic group 4'-phosphopantetheine of the acyl carrier protein ([ACP]) domain. Its function is as follows. (Microbial infection) Fatty acid synthetase activity is required for SARS coronavirus-2/SARS-CoV-2 replication. This Homo sapiens (Human) protein is Fatty acid synthase (FASN).